A 142-amino-acid polypeptide reads, in one-letter code: SLETGRYLIHNGNNIVSRNLAEDRSLNPKRIVLLEPTDKIQLTWIIEKSGDEYILNNRGAPTAHIEDHVFALLIHQEGATKWSIEAVPRHGRNAYIIKGSDGKGWVAPDKAGEQIIYRTLIVGPSEPPTFPLNQVFQIIKLE.

Position 1 is an N-acetylserine (Ser1).

Its function is as follows. Serine protease inhibitor. Active against beta-trypsin and alpha-chymotrypsin with dissociation constants of 0.35 nM and 40 nM respectively. Inhibits factor XIa, but not other enzymes involved in coagulation and fibrinolysis. Does not inhibit subtilisin, lysyl endopeptidase, arginyl endopeptidase or papain. The polypeptide is Serine protease inhibitor (Lentinula edodes (Shiitake mushroom)).